The primary structure comprises 408 residues: MLTPVNLLDFDVDGLVTWFAERGEKPFRARQVMRWMHRFGETDFGNMTDVAKSLRAKLAEEACIRAPRAIRDAVSVDGTRKWLLDVGSANAVEAVFIPETNRGTLCISSQAGCALDCAFCSTGKQGFNRNLSAAEIIGQLWLANRLLGGSASPAGSKDGDGGPDHASRATKLDHRAADAKGVQSDSWRSSDPEEDHNGRVISNVVMMGMGEPLANFDNVVTALRLMLDDHAYGLSRRRVTVSTSGIVPAMDRLRDECPVALAVSLHAPDDALRDRLVPINRKYPLRELMAACQRYLERAPRDFVTFEYVMLDDVNDSDAHARALVELVRDVPCKFNLIPFNPFPNSGFDRSPAERIRRFAAILIDAGIVTTTRKTRGDDVNAACGQLAGQVQDRSRRTVRLVKPMEGR.

Glu93 functions as the Proton acceptor in the catalytic mechanism. The Radical SAM core domain maps to 99 to 379; that stretch reads ETNRGTLCIS…TTTRKTRGDD (281 aa). Cys106 and Cys384 form a disulfide bridge. The [4Fe-4S] cluster site is built by Cys113, Cys117, and Cys120. The interval 152–196 is disordered; sequence SPAGSKDGDGGPDHASRATKLDHRAADAKGVQSDSWRSSDPEEDH. Basic and acidic residues predominate over residues 157–178; it reads KDGDGGPDHASRATKLDHRAAD. Residues 210-211, Ser242, 264-266, and Asn341 each bind S-adenosyl-L-methionine; these read GE and SLH. Residue Cys384 is the S-methylcysteine intermediate of the active site.

Belongs to the radical SAM superfamily. RlmN family. [4Fe-4S] cluster is required as a cofactor.

The protein localises to the cytoplasm. The enzyme catalyses adenosine(2503) in 23S rRNA + 2 reduced [2Fe-2S]-[ferredoxin] + 2 S-adenosyl-L-methionine = 2-methyladenosine(2503) in 23S rRNA + 5'-deoxyadenosine + L-methionine + 2 oxidized [2Fe-2S]-[ferredoxin] + S-adenosyl-L-homocysteine. It catalyses the reaction adenosine(37) in tRNA + 2 reduced [2Fe-2S]-[ferredoxin] + 2 S-adenosyl-L-methionine = 2-methyladenosine(37) in tRNA + 5'-deoxyadenosine + L-methionine + 2 oxidized [2Fe-2S]-[ferredoxin] + S-adenosyl-L-homocysteine. Its function is as follows. Specifically methylates position 2 of adenine 2503 in 23S rRNA and position 2 of adenine 37 in tRNAs. m2A2503 modification seems to play a crucial role in the proofreading step occurring at the peptidyl transferase center and thus would serve to optimize ribosomal fidelity. The protein is Dual-specificity RNA methyltransferase RlmN of Aromatoleum aromaticum (strain DSM 19018 / LMG 30748 / EbN1) (Azoarcus sp. (strain EbN1)).